The chain runs to 776 residues: MADRPAIQLIDEEKEFHQSALQYFQQCIGNRDVGLDYHVISVFGSQSSGKSTLLNVLFNTNFDTMDAQVKRQQTTKGIWLAHTKQVNTTIEIDNDRPDIFVLDVEGSDGSERGEDQDFERKAALFAIAVSEVLIVNMWEQQIGLYQGNNMALLKTVFEVNLSLFGKNDNDHKVLLLFVIRDHVGVTPLSSLSDSVTRELEKIWTELSKPAGCEGSSLYDYFDLKFVGLAHKLLQEDKFTQDVKKLGDSFVMKGTENYYFKPQYHHRLPLDGWTMYAENCWDQIERNKDLDLPTQQILVARFKTEEISNEALEEFISKYDESIAPLKGNLGSLTSQLVKLKEECLTKYDEQASRYARNVYMEKREALNTKLNSHISGTINEFLESLMEKLWDDLKLEVSSRDKATTSFVESVAAGKSKIEKEFNESMETFKKLGLLISNEEITCKFSDDIEERIKQLRDAELKAKIGRIKKNLVPELKDHVIHLLSHPSKKVWDDIMNDFESTIKDNISAYQVEKDKYDFKIGLSESENAKIYKNIRILAWRTLDTTVHDYLKIDTIVSILRDRFEDVFRYDAEGSPRLWKTEEEIDGAFRVAKEHALEVFEVLSLAVTSDNVEIIPDVPMAEEESGEDNEIYRDNEGVFHSRRFAHILTELQKENVLDQFRRQINITVLDSKRSIITTRTHIPPWIYVLLAVLGWNEFVAVIRNPLFVTLTLILGATFFVIHKFGLWGPVVNVVQSAVGETRTAIKDKLRQFVVEDHEVKESFEMKDFSKNEQKEK.

Topologically, residues 1–681 are cytoplasmic; it reads MADRPAIQLI…KRSIITTRTH (681 aa). A GB1/RHD3-type G domain is found at 34–263; it reads GLDYHVISVF…TENYYFKPQY (230 aa). 44-51 is a binding site for GTP; that stretch reads GSQSSGKS. The helical transmembrane segment at 682–702 threads the bilayer; it reads IPPWIYVLLAVLGWNEFVAVI. Over 703-705 the chain is Lumenal; that stretch reads RNP. The chain crosses the membrane as a helical span at residues 706-726; that stretch reads LFVTLTLILGATFFVIHKFGL. Topologically, residues 727–776 are cytoplasmic; it reads WGPVVNVVQSAVGETRTAIKDKLRQFVVEDHEVKESFEMKDFSKNEQKEK.

The protein belongs to the TRAFAC class dynamin-like GTPase superfamily. GB1/RHD3 GTPase family. RHD3 subfamily. In terms of assembly, interacts with RTN1 and YOP1; GTP binding is not required for these interactions.

The protein localises to the endoplasmic reticulum membrane. Its function is as follows. Cooperates with the reticulon proteins RTN1 and RTN2 and the tubule-shaping DP1 family protein YOP1 to generate and maintain the structure of the tubular endoplasmic reticulum network. Has GTPase activity, which is required for its function in ER organization. The chain is Protein SEY1 from Saccharomyces cerevisiae (strain ATCC 204508 / S288c) (Baker's yeast).